Consider the following 72-residue polypeptide: 3-deoxy-manno-octulosonate cytidylyltransferase (72 aa).

Belongs to the KdsB family. As to quaternary structure, homodimer.

It is found in the cytoplasm. It carries out the reaction 3-deoxy-alpha-D-manno-oct-2-ulosonate + CTP = CMP-3-deoxy-beta-D-manno-octulosonate + diphosphate. It participates in nucleotide-sugar biosynthesis; CMP-3-deoxy-D-manno-octulosonate biosynthesis; CMP-3-deoxy-D-manno-octulosonate from 3-deoxy-D-manno-octulosonate and CTP: step 1/1. Its pathway is bacterial outer membrane biogenesis; lipopolysaccharide biosynthesis. Functionally, activates KDO (a required 8-carbon sugar) for incorporation into bacterial lipopolysaccharide in Gram-negative bacteria. This Escherichia coli protein is 3-deoxy-manno-octulosonate cytidylyltransferase (kpsU).